The sequence spans 391 residues: Na(+)/H(+) antiporter NhaA 2 (391 aa).

11 consecutive transmembrane segments (helical) span residues 25–45 (AGGI…NSPL), 56–76 (VWLG…IFFL), 98–118 (ALPG…YIAI), 128–148 (GWAI…SLLG), 157–177 (VFLA…IAFF), 180–200 (SGLN…LVAL), 208–228 (LLPY…SGVH), 264–284 (VAFA…LSGI), 297–317 (VALG…VLAI), 335–355 (GVAI…NLAF), and 364–384 (EVKV…IVLL).

Belongs to the NhaA Na(+)/H(+) (TC 2.A.33) antiporter family.

Its subcellular location is the cell inner membrane. The enzyme catalyses Na(+)(in) + 2 H(+)(out) = Na(+)(out) + 2 H(+)(in). In terms of biological role, na(+)/H(+) antiporter that extrudes sodium in exchange for external protons. This is Na(+)/H(+) antiporter NhaA 2 from Pseudomonas syringae pv. tomato (strain ATCC BAA-871 / DC3000).